The primary structure comprises 206 residues: Transcription antitermination protein NusB (206 aa).

The tract at residues 135–206 (ARGEKTSAQE…ETQPPGVNEV (72 aa)) is disordered. Positions 169 to 180 (ATPATTPVTTTV) are enriched in low complexity.

The protein belongs to the NusB family.

Functionally, involved in transcription antitermination. Required for transcription of ribosomal RNA (rRNA) genes. Binds specifically to the boxA antiterminator sequence of the ribosomal RNA (rrn) operons. The polypeptide is Transcription antitermination protein NusB (Heliobacterium modesticaldum (strain ATCC 51547 / Ice1)).